The chain runs to 140 residues: Putative pre-16S rRNA nuclease (140 aa).

The protein belongs to the YqgF nuclease family.

Its subcellular location is the cytoplasm. Could be a nuclease involved in processing of the 5'-end of pre-16S rRNA. In Endomicrobium trichonymphae, this protein is Putative pre-16S rRNA nuclease.